Here is a 339-residue protein sequence, read N- to C-terminus: Serine/threonine-protein kinase pdik1l-B (339 aa).

Positions 8–332 (YDLIREVGRG…LELKLIQIAF (325 aa)) constitute a Protein kinase domain. ATP is bound by residues 14–22 (VGRGSYGLV) and K37. Catalysis depends on D164, which acts as the Proton acceptor.

It belongs to the protein kinase superfamily. Ser/Thr protein kinase family.

The protein localises to the nucleus. It catalyses the reaction L-seryl-[protein] + ATP = O-phospho-L-seryl-[protein] + ADP + H(+). The enzyme catalyses L-threonyl-[protein] + ATP = O-phospho-L-threonyl-[protein] + ADP + H(+). This chain is Serine/threonine-protein kinase pdik1l-B (pdik1-b), found in Xenopus laevis (African clawed frog).